A 380-amino-acid chain; its full sequence is Glucose-1-phosphate adenylyltransferase (380 aa).

Alpha-D-glucose 1-phosphate is bound by residues Gly164, Glu179–Lys180, and Ser190.

It belongs to the bacterial/plant glucose-1-phosphate adenylyltransferase family. Homotetramer.

The enzyme catalyses alpha-D-glucose 1-phosphate + ATP + H(+) = ADP-alpha-D-glucose + diphosphate. The protein operates within glycan biosynthesis; glycogen biosynthesis. Involved in the biosynthesis of ADP-glucose, a building block required for the elongation reactions to produce glycogen. Catalyzes the reaction between ATP and alpha-D-glucose 1-phosphate (G1P) to produce pyrophosphate and ADP-Glc. The polypeptide is Glucose-1-phosphate adenylyltransferase (Ligilactobacillus salivarius (strain UCC118) (Lactobacillus salivarius)).